Here is a 508-residue protein sequence, read N- to C-terminus: Probable glycine dehydrogenase (decarboxylating) subunit 2 (508 aa).

Lys-277 carries the post-translational modification N6-(pyridoxal phosphate)lysine.

This sequence belongs to the GcvP family. C-terminal subunit subfamily. As to quaternary structure, the glycine cleavage system is composed of four proteins: P, T, L and H. In this organism, the P 'protein' is a heterodimer of two subunits. Pyridoxal 5'-phosphate serves as cofactor.

The enzyme catalyses N(6)-[(R)-lipoyl]-L-lysyl-[glycine-cleavage complex H protein] + glycine + H(+) = N(6)-[(R)-S(8)-aminomethyldihydrolipoyl]-L-lysyl-[glycine-cleavage complex H protein] + CO2. Its function is as follows. The glycine cleavage system catalyzes the degradation of glycine. The P protein binds the alpha-amino group of glycine through its pyridoxal phosphate cofactor; CO(2) is released and the remaining methylamine moiety is then transferred to the lipoamide cofactor of the H protein. This Saccharolobus solfataricus (strain ATCC 35092 / DSM 1617 / JCM 11322 / P2) (Sulfolobus solfataricus) protein is Probable glycine dehydrogenase (decarboxylating) subunit 2.